A 357-amino-acid polypeptide reads, in one-letter code: Dihydroorotate dehydrogenase (quinone) (357 aa).

FMN is bound by residues 66 to 70 (AGFDK) and threonine 90. Lysine 70 is a substrate binding site. 115 to 119 (NRMGF) is a binding site for substrate. Residues asparagine 143 and asparagine 176 each coordinate FMN. Asparagine 176 contributes to the substrate binding site. The Nucleophile role is filled by serine 179. Asparagine 181 serves as a coordination point for substrate. Residues lysine 212 and threonine 240 each contribute to the FMN site. Residue 241–242 (NT) participates in substrate binding. FMN is bound by residues glycine 264, glycine 293, and 314-315 (YT).

This sequence belongs to the dihydroorotate dehydrogenase family. Type 2 subfamily. As to quaternary structure, monomer. It depends on FMN as a cofactor.

It is found in the cell membrane. The enzyme catalyses (S)-dihydroorotate + a quinone = orotate + a quinol. It functions in the pathway pyrimidine metabolism; UMP biosynthesis via de novo pathway; orotate from (S)-dihydroorotate (quinone route): step 1/1. Its function is as follows. Catalyzes the conversion of dihydroorotate to orotate with quinone as electron acceptor. The chain is Dihydroorotate dehydrogenase (quinone) from Mycobacterium tuberculosis (strain ATCC 25177 / H37Ra).